We begin with the raw amino-acid sequence, 254 residues long: 3-dehydroquinate dehydratase (254 aa).

3-dehydroquinate contacts are provided by residues 47 to 49 and arginine 83; that span reads EFR. The Proton donor/acceptor role is filled by histidine 144. The Schiff-base intermediate with substrate role is filled by lysine 171. 3-dehydroquinate is bound by residues arginine 213, serine 232, and glutamine 236.

This sequence belongs to the type-I 3-dehydroquinase family. Homodimer.

It carries out the reaction 3-dehydroquinate = 3-dehydroshikimate + H2O. The protein operates within metabolic intermediate biosynthesis; chorismate biosynthesis; chorismate from D-erythrose 4-phosphate and phosphoenolpyruvate: step 3/7. In terms of biological role, involved in the third step of the chorismate pathway, which leads to the biosynthesis of aromatic amino acids. Catalyzes the cis-dehydration of 3-dehydroquinate (DHQ) and introduces the first double bond of the aromatic ring to yield 3-dehydroshikimate. The protein is 3-dehydroquinate dehydratase of Neisseria meningitidis serogroup B (strain ATCC BAA-335 / MC58).